The chain runs to 206 residues: CASP-like protein 1F1 (206 aa).

At 1–43 (MCFQFSILYTCYLAHFGVFPRKYLVMAGIEAKFQQNPPLGTHK) the chain is on the cytoplasmic side. Residues 44-64 (LFLGAHICLRILTVTATLTAA) form a helical membrane-spanning segment. Residues 65-92 (WMMITSKQTVEVYGIQVEAKYSYSSAFK) are Extracellular-facing. Residues 93-113 (FFSYANAIACGCSVLTLFPAF) form a helical membrane-spanning segment. Residues 114 to 124 (SLFYRGSTPMK) lie on the Cytoplasmic side of the membrane. A helical transmembrane segment spans residues 125–145 (FFFLFLHDLCMMSLVLAGCAA). Over 146–177 (ATAIGYVGRYGNNHAGWMAICDQFDEYCNRIR) the chain is Extracellular. A helical membrane pass occupies residues 178–198 (LSLMFSYLAFVFILMLTIMSA). Over 199-206 (NKSREIRV) the chain is Cytoplasmic.

It belongs to the Casparian strip membrane proteins (CASP) family. In terms of assembly, homodimer and heterodimers.

The protein localises to the cell membrane. The sequence is that of CASP-like protein 1F1 from Vitis vinifera (Grape).